The primary structure comprises 523 residues: MAIRTVSSLVRALYQTPKSQSFRIFSTLLHDPPSPDLVNEISRVLSDHRNPKDDLEHTLVAYSPRVSSNLVEQVLKRCKNLGFPAHRFFLWARRIPDFAHSLESYHILVEILGSSKQFALLWDFLIEAREYNYFEISSKVFWIVFRAYSRANLPSEACRAFNRMVEFGIKPCVDDLDQLLHSLCDKKHVNHAQEFFGKAKGFGIVPSAKTYSILVRGWARIRDASGARKVFDEMLERNCVVDLLAYNALLDALCKSGDVDGGYKMFQEMGNLGLKPDAYSFAIFIHAYCDAGDVHSAYKVLDRMKRYDLVPNVYTFNHIIKTLCKNEKVDDAYLLLDEMIQKGANPDTWTYNSIMAYHCDHCEVNRATKLLSRMDRTKCLPDRHTYNMVLKLLIRIGRFDRATEIWEGMSERKFYPTVATYTVMIHGLVRKKGKLEEACRYFEMMIDEGIPPYSTTVEMLRNRLVGWGQMDVVDVLAGKMERSSSCSVQDMAVEMRGKRRRLGRRSENSEDDDDDFELERDTI.

A mitochondrion-targeting transit peptide spans 1–5; sequence MAIRT. 10 PPR repeats span residues 101–135, 137–171, 172–206, 207–241, 242–276, 277–311, 312–346, 347–381, 382–416, and 417–452; these read SLES…NYFE, SSKV…GIKP, CVDD…GIVP, SAKT…NCVV, DLLA…GLKP, DAYS…DLVP, NVYT…GANP, DTWT…KCLP, DRHT…KFYP, and TVAT…GIPP. Residues 498-523 are disordered; it reads KRRRLGRRSENSEDDDDDFELERDTI. The span at 509–523 shows a compositional bias: acidic residues; the sequence is SEDDDDDFELERDTI.

The protein belongs to the PPR family. P subfamily.

The protein localises to the mitochondrion. The chain is Pentatricopeptide repeat-containing protein At1g52640, mitochondrial from Arabidopsis thaliana (Mouse-ear cress).